A 995-amino-acid polypeptide reads, in one-letter code: Beta-agarase A (995 aa).

A signal peptide spans 1–20 (MKIKFLSAAIAASLALPLSA). The interval 936-972 (GTNIGVSHSGPEAPDPGEPVDPPIDPPTPPTGGVTGG) is disordered. Residues 948 to 965 (APDPGEPVDPPIDPPTPP) are compositionally biased toward pro residues.

This sequence belongs to the glycosyl hydrolase 50 family.

The enzyme catalyses Hydrolysis of (1-&gt;4)-beta-D-galactosidic linkages in agarose, giving the tetramer as the predominant product.. Functionally, hydrolyzes agarose and also neoagarotetraose to yield neoagarobiose. The sequence is that of Beta-agarase A (agaA) from Vibrio sp. (strain JT0107).